Reading from the N-terminus, the 177-residue chain is MSSTRAAIRYAKAIIEIATSKNAANEVSNDMFLIATTINSNSELDTFIQNPTIKVEAKENALLEVFANTNEVTKSLFHLLFENKRFEILGAIASEYNKLFDEINGIQVAKVTTAIAMDANLEAKVKAKIATFSDKKVTIENTVDASIIGGFILRIGDKQYNASVANRLQVLKRELSN.

Belongs to the ATPase delta chain family. As to quaternary structure, F-type ATPases have 2 components, F(1) - the catalytic core - and F(0) - the membrane proton channel. F(1) has five subunits: alpha(3), beta(3), gamma(1), delta(1), epsilon(1). F(0) has three main subunits: a(1), b(2) and c(10-14). The alpha and beta chains form an alternating ring which encloses part of the gamma chain. F(1) is attached to F(0) by a central stalk formed by the gamma and epsilon chains, while a peripheral stalk is formed by the delta and b chains.

The protein resides in the cell inner membrane. Functionally, f(1)F(0) ATP synthase produces ATP from ADP in the presence of a proton or sodium gradient. F-type ATPases consist of two structural domains, F(1) containing the extramembraneous catalytic core and F(0) containing the membrane proton channel, linked together by a central stalk and a peripheral stalk. During catalysis, ATP synthesis in the catalytic domain of F(1) is coupled via a rotary mechanism of the central stalk subunits to proton translocation. In terms of biological role, this protein is part of the stalk that links CF(0) to CF(1). It either transmits conformational changes from CF(0) to CF(1) or is implicated in proton conduction. This is ATP synthase subunit delta from Flavobacterium psychrophilum (strain ATCC 49511 / DSM 21280 / CIP 103535 / JIP02/86).